Consider the following 338-residue polypeptide: 4'-phosphopantetheinyl transferase (338 aa).

This sequence belongs to the P-Pant transferase superfamily.

The enzyme catalyses apo-[ACP] + CoA = holo-[ACP] + adenosine 3',5'-bisphosphate + H(+). In terms of biological role, acyl-carrier-protein synthase that transfers the 4'-phosphopantetheine moiety from coenzyme A to a Ser of an acyl-carrier-protein. The 4'-phosphopantetheine (4'-PPT) portion of CoA provides the essential prosthetic group for a number of carrier proteins and multi-domain enzymes, priming them for the acceptance of acyl building blocks in fatty acid synthesis and many aspects of secondary metabolism mediated by polyketide synthases (PKSs) and non-ribosomal peptide synthetases (NRPSs). Plays a key role in liamocins biosynthesis by activationg the HR-PKS PKS1 that produces 3,5-dihydroxydecanoic acid, a precursor of liamocins. This Aureobasidium melanogenum (Aureobasidium pullulans var. melanogenum) protein is 4'-phosphopantetheinyl transferase.